A 1299-amino-acid chain; its full sequence is DNA-directed RNA polymerase subunit beta' (1299 aa).

Zn(2+)-binding residues include Cys60, Cys62, Cys75, and Cys78. Residues 188-209 form a disordered region; sequence GAKSDQKRRAKDGAEKEMGQTR. Mg(2+) is bound by residues Asp535, Asp537, and Asp539. Zn(2+) is bound by residues Cys882, Cys959, Cys966, and Cys969.

The protein belongs to the RNA polymerase beta' chain family. As to quaternary structure, the RNAP catalytic core consists of 2 alpha, 1 beta, 1 beta' and 1 omega subunit. When a sigma factor is associated with the core the holoenzyme is formed, which can initiate transcription. It depends on Mg(2+) as a cofactor. The cofactor is Zn(2+).

It carries out the reaction RNA(n) + a ribonucleoside 5'-triphosphate = RNA(n+1) + diphosphate. Functionally, DNA-dependent RNA polymerase catalyzes the transcription of DNA into RNA using the four ribonucleoside triphosphates as substrates. In Clavibacter michiganensis subsp. michiganensis (strain NCPPB 382), this protein is DNA-directed RNA polymerase subunit beta'.